Reading from the N-terminus, the 229-residue chain is Ribonuclease T (229 aa).

The region spanning 23–197 is the Exonuclease domain; the sequence is VIIDVETAGF…YDTERTAKLF (175 aa). Mg(2+) contacts are provided by aspartate 26, glutamate 28, histidine 184, and aspartate 189. Residue histidine 184 is the Proton donor/acceptor of the active site.

Belongs to the RNase T family. Homodimer. Requires Mg(2+) as cofactor.

In terms of biological role, trims short 3' overhangs of a variety of RNA species, leaving a one or two nucleotide 3' overhang. Responsible for the end-turnover of tRNA: specifically removes the terminal AMP residue from uncharged tRNA (tRNA-C-C-A). Also appears to be involved in tRNA biosynthesis. This chain is Ribonuclease T, found in Haemophilus influenzae (strain PittGG).